We begin with the raw amino-acid sequence, 380 residues long: Lipid-A-disaccharide synthase (380 aa).

It belongs to the LpxB family.

It carries out the reaction a lipid X + a UDP-2-N,3-O-bis[(3R)-3-hydroxyacyl]-alpha-D-glucosamine = a lipid A disaccharide + UDP + H(+). The protein operates within bacterial outer membrane biogenesis; LPS lipid A biosynthesis. Functionally, condensation of UDP-2,3-diacylglucosamine and 2,3-diacylglucosamine-1-phosphate to form lipid A disaccharide, a precursor of lipid A, a phosphorylated glycolipid that anchors the lipopolysaccharide to the outer membrane of the cell. In Pseudomonas syringae pv. syringae (strain B728a), this protein is Lipid-A-disaccharide synthase.